Reading from the N-terminus, the 862-residue chain is MSTAAIPTDAAVQAAIAEARARLADGSMRIRMAYEGHPATSTVLKGRAHLVDETIHRLWRACAMPADVALLAVGGYGRGELFPCSDVDLMVLLPDTADDAMQARLSVLLGALWDVGLEIGHSARTVAEAIDAAEQDITVQTNLLESRLLEGNRPLFEEFCRRYRALLDVRVFFKAKQLEQEKRYARYNDTPYALEPNCKESPGGLRDLQMLGWIARAAGLGRNWRDLARRRLITGAEARDLRSIERFLQHVRIRLHYLTGRSEDRLLFDYQERLASALGIEATAAKRASEVFMQRYYVNAKKVTQTNTILLQNYGVEIFPRRAGAAIVINERFQAVRELLDMREDDTFARHPSALLECFLILQQRSELKGMTARTLRALWLNRKRINAAFRADPHNRELFVAILQQKRGIVHEFRRMNQYGILSGYLPSWRRIVGQMQHDLFHVYTVDQHIMMVLRNMRRFTMGEHAHEYPLMAQLIMAFDRHWLLYVAALFHDIAKGRGGDHSKLGTIDAREFCEHHHLAREDADLVVWLVEHHLTMSHVAQKEDTSDPAVIGRFADTVGTERRLTALYLLTHADIRGTSPKVWNGWKGKLLEDLFFATRRLLRGATPQEALGLDDRQENARALLRYHGLRPGVEDALWAQLDAVYFMRHSAEEIAWHSRTLYYRPDALEPVVKARVSDADQGVQVMVFTRDQKDLFVRLTGFFGRLGFSILDAKVHTTRHGYALDSFMLQDPGNAEHYRDVITLIEHELTERLKKSAPPDRPSAGRLSRQVKHFPITPRVSILPDESGRHYILSLTAADRRGLLFAVAEVLAQNGIVLHTAKIATLGERVEDTFLLSGNGLSQDARVVKIERELLQRLHI.

The interval 1 to 328 (MSTAAIPTDA…FPRRAGAAIV (328 aa)) is uridylyltransferase. The uridylyl-removing stretch occupies residues 329-685 (INERFQAVRE…ARVSDADQGV (357 aa)). The region spanning 447–563 (VDQHIMMVLR…GRFADTVGTE (117 aa)) is the HD domain. 2 consecutive ACT domains span residues 686 to 765 (QVMV…DRPS) and 794 to 862 (ILSL…RLHI).

The protein belongs to the GlnD family. It depends on Mg(2+) as a cofactor.

It carries out the reaction [protein-PII]-L-tyrosine + UTP = [protein-PII]-uridylyl-L-tyrosine + diphosphate. The enzyme catalyses [protein-PII]-uridylyl-L-tyrosine + H2O = [protein-PII]-L-tyrosine + UMP + H(+). Uridylyltransferase (UTase) activity is inhibited by glutamine, while glutamine activates uridylyl-removing (UR) activity. In terms of biological role, modifies, by uridylylation and deuridylylation, the PII regulatory proteins (GlnB and homologs), in response to the nitrogen status of the cell that GlnD senses through the glutamine level. Under low glutamine levels, catalyzes the conversion of the PII proteins and UTP to PII-UMP and PPi, while under higher glutamine levels, GlnD hydrolyzes PII-UMP to PII and UMP (deuridylylation). Thus, controls uridylylation state and activity of the PII proteins, and plays an important role in the regulation of nitrogen assimilation and metabolism. In Aromatoleum aromaticum (strain DSM 19018 / LMG 30748 / EbN1) (Azoarcus sp. (strain EbN1)), this protein is Bifunctional uridylyltransferase/uridylyl-removing enzyme.